Here is an 836-residue protein sequence, read N- to C-terminus: Neuroligin-2 (836 aa).

The signal sequence occupies residues 1 to 14 (MWLLALCLVGLAGA). Residues 15-678 (QRGGGGPGGG…DSRDYSTELS (664 aa)) lie on the Extracellular side of the membrane. N-linked (GlcNAc...) asparagine glycans are attached at residues Asn98 and Asn136. Cystine bridges form between Cys106-Cys141, Cys317-Cys328, and Cys487-Cys521. Asn522 carries N-linked (GlcNAc...) asparagine glycosylation. The disordered stretch occupies residues 623 to 661 (PPYATRWPPRTPGPGTSGTRRPPPPATLPPESDIDLGPR). A helical transmembrane segment spans residues 679-699 (VTVAVGASLLFLNILAFAALY). Positions 679-699 (VTVAVGASLLFLNILAFAALY) are required for interaction with LHFPL4. Over 700–836 (YKRDRRQELR…LPHPHSTTRV (137 aa)) the chain is Cytoplasmic. Disordered regions lie at residues 711–735 (RRLS…TAGR) and 791–836 (LLPS…TTRV). Residues Ser714 and Ser719 each carry the phosphoserine modification. A compositionally biased stretch (gly residues) spans 717–728 (GGSGSGVPGGGP). The segment covering 796 to 819 (LGPPPPPPPPSLHPFGPFPPPPPT) has biased composition (pro residues). Positions 824-836 (NNTLPHPHSTTRV) are enriched in polar residues.

It belongs to the type-B carboxylesterase/lipase family. In terms of assembly, interacts with neurexins NRXN1, NRXN2 and NRXN3. Interaction with neurexins is mediated by heparan sulfate glycan modification on neurexin. Interacts (via its C-terminus) with DLG4/PSD-95 (via PDZ domain 3). Interacts with PATJ. Interacts with GPHN. Interacts with MDGA1 and MDGA2. Found in a complex with MAGI2 and IGSF9B, where it interacts with MAGI2 (via WW 1, WW 2 and PDZ 2 domains). Identified in a complex of 720 kDa composed of LHFPL4, NLGN2, GABRA1, GABRB2, GABRG2 and GABRB3. Interacts with LHFPL4; leading to mutual regulation of the protein level and synaptic clustering. Interacts with GABRA1. Detected on hippocampus neurons, especially at inhibitory synapses. Detected in retina, in the outer and inner plexiform layer. Detected in pancreas, in islet of Langerhans beta cells (at protein level). Expressed in brain, spinal cord and dorsal root ganglion. Detected in brain, and at lower levels in pancreas islet beta cells.

The protein resides in the cell membrane. The protein localises to the postsynaptic cell membrane. It localises to the presynaptic cell membrane. In terms of biological role, transmembrane scaffolding protein involved in cell-cell interactions via its interactions with neurexin family members. Mediates cell-cell interactions both in neurons and in other types of cells, such as Langerhans beta cells. Plays a role in synapse function and synaptic signal transmission, especially via gamma-aminobutyric acid receptors (GABA(A) receptors). Functions by recruiting and clustering synaptic proteins. Promotes clustering of postsynaptic GABRG2 and GPHN. Promotes clustering of postsynaptic LHFPL4. Modulates signaling by inhibitory synapses, and thereby plays a role in controlling the ratio of signaling by excitatory and inhibitory synapses and information processing. Required for normal signal amplitude from inhibitory synapses, but is not essential for normal signal frequency. May promote the initial formation of synapses, but is not essential for this. In vitro, triggers the de novo formation of presynaptic structures. Mediates cell-cell interactions between Langerhans beta cells and modulates insulin secretion. This chain is Neuroligin-2 (Nlgn2), found in Rattus norvegicus (Rat).